The chain runs to 277 residues: Large ribosomal subunit protein uL2 (277 aa).

The segment at 219 to 277 (TVRGSVMNPNDHPHGGGEGRSPIGHPSPRTPWGKPALGYKTRKNKKYSDRFIVKRRHDK) is disordered.

The protein belongs to the universal ribosomal protein uL2 family. As to quaternary structure, part of the 50S ribosomal subunit. Forms a bridge to the 30S subunit in the 70S ribosome.

Its function is as follows. One of the primary rRNA binding proteins. Required for association of the 30S and 50S subunits to form the 70S ribosome, for tRNA binding and peptide bond formation. It has been suggested to have peptidyltransferase activity; this is somewhat controversial. Makes several contacts with the 16S rRNA in the 70S ribosome. The polypeptide is Large ribosomal subunit protein uL2 (Clostridium botulinum (strain ATCC 19397 / Type A)).